A 507-amino-acid chain; its full sequence is Keratin, type II cuticular Hb5 (507 aa).

Positions M1 to E123 are head. The IF rod domain occupies E123–L434. The interval K124–Y158 is coil 1A. A linker 1 region spans residues Q159–L168. The tract at residues E169–A269 is coil 1B. Residue K229 forms a Glycyl lysine isopeptide (Lys-Gly) (interchain with G-Cter in SUMO1) linkage. The segment at H270–L286 is linker 12. The segment at N287–E430 is coil 2. Residues E431 to A507 form a tail region.

Belongs to the intermediate filament family. In terms of assembly, heterotetramer of two type I and two type II keratins.

This is Keratin, type II cuticular Hb5 (Krt85) from Mus musculus (Mouse).